The sequence spans 673 residues: uncharacterized protein (673 aa).

The tract at residues 1 to 95 is disordered; sequence MLNGEKSALG…QSSAIADSIG (95 aa). A compositionally biased stretch (low complexity) spans 13–40; sequence PSNSNSSSKLNAKSPNFIPSSSNIPRSS. Residues 42 to 60 show a composition bias toward basic and acidic residues; the sequence is KTKEHSADRKPHRNSEKKT. The segment at 214–273 adopts an RING-type zinc-finger fold; sequence CPFCLEEKPVAARMSRCGHVYCFSCLLRFVETPTAAEVKAAETSGTKIVKCGHRSCPICW. Positions 649–673 are disordered; that stretch reads SAPSKNSKNKKKKKLVLLSTGAAHR.

It is found in the cytoplasm. The protein localises to the nucleus. This is an uncharacterized protein from Schizosaccharomyces pombe (strain 972 / ATCC 24843) (Fission yeast).